Consider the following 197-residue polypeptide: Putative early 21.8 kDa protein (197 aa).

This protein is required for viral late gene expression. This is Putative early 21.8 kDa protein (DA26) from Orgyia pseudotsugata (Douglas-fir tussock moth).